The sequence spans 499 residues: Gypsy retrotransposon integrase-like protein 1 (499 aa).

In terms of domain architecture, Integrase catalytic spans 113–270 (KVENPWSIVT…TPYFQMFNRN (158 aa)).

In Bos taurus (Bovine), this protein is Gypsy retrotransposon integrase-like protein 1 (GIN1).